The following is a 673-amino-acid chain: Vasorin (673 aa).

The first 23 residues, 1–23 (MCSRVPLLLPLLLLLALGPGVQG), serve as a signal peptide directing secretion. Positions 24 to 51 (CPSGCQCSQPQTVFCTARQGTTVPRDVP) constitute an LRRNT domain. The Extracellular segment spans residues 24-575 (CPSGCQCSQP…VTQAREGNLP (552 aa)). 10 LRR repeats span residues 52 to 74 (PDTVGLYVFENGITMLDAGSFAG), 77 to 98 (GLQLLDLSQNQIASLPSGVFQP), 101 to 122 (NLSNLDLTANRLHEITNETFRG), 125 to 146 (RLERLYLGKNRIRHIQPGAFDT), 149 to 170 (RLLELKLQDNELRALPPLRLPR), 171 to 191 (LLLLDLSHNSLLALEPGILDT), 193 to 214 (NVEALRLAGLGLQQLDEGLFSR), 217 to 238 (NLHDLDVSDNQLERVPPVIRGL), 240 to 262 (GLTRLRLAGNTRIAQLRPEDLAG), and 265 to 287 (ALQELDVSNLSLQALPGDLSGLF). N-linked (GlcNAc...) asparagine glycosylation is present at asparagine 101. An N-linked (GlcNAc...) (complex) asparagine glycan is attached at asparagine 117. The N-linked (GlcNAc...) asparagine glycan is linked to asparagine 273. Residues 298-351 (NPFNCVCPLSWFGPWVRESHVTLASPEETRCHFPPKNAGRLLLELDYADFGCPA) form the LRRCT domain. Over residues 358 to 370 (VPTTRPVVREPTA) the composition is skewed to low complexity. Positions 358-404 (VPTTRPVVREPTALSSSLAPTWLSPTEPATEAPSPPSTAPPTVGPVP) are disordered. Residues 390–404 (PSPPSTAPPTVGPVP) are compositionally biased toward pro residues. The EGF-like domain occupies 405–442 (QPQDCPPSTCLNGGTCHLGTRHHLACLCPEGFTGLYCE). 3 disulfides stabilise this stretch: cysteine 409/cysteine 420, cysteine 414/cysteine 430, and cysteine 432/cysteine 441. One can recognise a Fibronectin type-III domain in the interval 460-558 (PPRSLTLGIE…ACGEAHTPPA (99 aa)). N-linked (GlcNAc...) asparagine glycosylation is found at asparagine 500 and asparagine 528. Residues 576-596 (LLIAPALAAVLLAALAAVGAA) form a helical membrane-spanning segment. At 597–673 (YCVRRGRAMA…QSPLHAKPYI (77 aa)) the chain is on the cytoplasmic side.

Interacts with TGFB1, TGFB2 and TGFB3. N-glycosylated. N-glycan heterogeneity at Asn-117: Hex5HexNAc4 (minor), dHex1Hex5HexNAc4 (major), Hex6HexNAc5 (minor) and dHex1Hex6HexNAc5 (minor). As to expression, expressed at highest levels in aorta, at intermediate levels in kidney and placenta and at lowest levels in brain, heart, liver, lung and skeletal muscle. Within the aorta, the strongest expression is found in the tunica media of the proximal ascending aorta, the descending thoracic aorta, the abdominal aorta and the coronary arteries. Within the kidney, expression is found in the interstitial cells.

The protein resides in the membrane. It localises to the secreted. Functionally, may act as an inhibitor of TGF-beta signaling. In Homo sapiens (Human), this protein is Vasorin (VASN).